A 128-amino-acid chain; its full sequence is Large ribosomal subunit protein uL22 (128 aa).

The protein belongs to the universal ribosomal protein uL22 family. Part of the 50S ribosomal subunit.

In terms of biological role, this protein binds specifically to 23S rRNA; its binding is stimulated by other ribosomal proteins, e.g. L4, L17, and L20. It is important during the early stages of 50S assembly. It makes multiple contacts with different domains of the 23S rRNA in the assembled 50S subunit and ribosome. Its function is as follows. The globular domain of the protein is located near the polypeptide exit tunnel on the outside of the subunit, while an extended beta-hairpin is found that lines the wall of the exit tunnel in the center of the 70S ribosome. This Rhodopseudomonas palustris (strain HaA2) protein is Large ribosomal subunit protein uL22.